Consider the following 364-residue polypeptide: Tyrosine-protein phosphatase YVH1 (364 aa).

The Tyrosine-protein phosphatase domain maps to 11–173; sequence EVTRILGGIY…LHLFEKMGGD (163 aa). Catalysis depends on cysteine 117, which acts as the Phosphocysteine intermediate. Position 196 is a phosphoserine (serine 196).

The protein belongs to the protein-tyrosine phosphatase family. Non-receptor class dual specificity subfamily.

It catalyses the reaction O-phospho-L-tyrosyl-[protein] + H2O = L-tyrosyl-[protein] + phosphate. Its function is as follows. May be directly involved in signal transduction and/or cell cycle regulation. It is necessary for maintaining growth rate or spore germination. Could show both activity toward tyrosine-protein phosphate as well as with serine-protein phosphate. In Saccharomyces cerevisiae (strain ATCC 204508 / S288c) (Baker's yeast), this protein is Tyrosine-protein phosphatase YVH1 (YVH1).